Consider the following 108-residue polypeptide: Mitochondrial import inner membrane translocase subunit tim-13 (108 aa).

Positions 45-68 (CTNKCITAPGSSLASGEKQCLQRC) match the Twin CX3C motif motif. Cystine bridges form between Cys-45–Cys-68 and Cys-49–Cys-64. Positions 89–108 (EEMASSGGMGGGFGQGPSFS) are disordered. Residues 95–108 (GGMGGGFGQGPSFS) show a composition bias toward gly residues.

Belongs to the small Tim family. Heterohexamer; composed of 3 copies of tim-8/ddp-1 and 3 copies of tin-13/tim-13, named soluble 70 kDa complex. Associates with the TIM22 complex, whose core is composed of tim-22.

It localises to the mitochondrion inner membrane. Mitochondrial intermembrane chaperone that participates in the import and insertion of some multi-pass transmembrane proteins into the mitochondrial inner membrane. Also required for the transfer of beta-barrel precursors from the TOM complex to the sorting and assembly machinery (SAM complex) of the outer membrane. Acts as a chaperone-like protein that protects the hydrophobic precursors from aggregation and guide them through the mitochondrial intermembrane space. The tim-8-tim-13 complex mediates the import of some proteins while the predominant tim-9/tin-9.1-tim-10/tin-10 70 kDa complex mediates the import of much more proteins. This Caenorhabditis elegans protein is Mitochondrial import inner membrane translocase subunit tim-13 (tin-13).